The following is a 368-amino-acid chain: 7,8-didemethyl-8-hydroxy-5-deazariboflavin synthase (368 aa).

The region spanning 36–272 (LSYCRNVFLP…EEVSVQVPPN (237 aa)) is the Radical SAM core domain. [4Fe-4S] cluster is bound by residues Cys-50, Cys-54, and Cys-57.

Belongs to the radical SAM superfamily. CofG family. Consists of two subunits, CofG and CofH. [4Fe-4S] cluster serves as cofactor.

It carries out the reaction 5-amino-5-(4-hydroxybenzyl)-6-(D-ribitylimino)-5,6-dihydrouracil + S-adenosyl-L-methionine = 7,8-didemethyl-8-hydroxy-5-deazariboflavin + 5'-deoxyadenosine + L-methionine + NH4(+) + H(+). It participates in cofactor biosynthesis; coenzyme F0 biosynthesis. Functionally, catalyzes the radical-mediated synthesis of 7,8-didemethyl-8-hydroxy-5-deazariboflavin from 5-amino-5-(4-hydroxybenzyl)-6-(D-ribitylimino)-5,6-dihydrouracil. This chain is 7,8-didemethyl-8-hydroxy-5-deazariboflavin synthase, found in Haloarcula marismortui (strain ATCC 43049 / DSM 3752 / JCM 8966 / VKM B-1809) (Halobacterium marismortui).